Reading from the N-terminus, the 807-residue chain is AP-5 complex subunit zeta-1 (807 aa).

In terms of assembly, probably part of the adaptor protein complex 5 (AP-5) a tetramer composed of AP5B1, AP5M1, AP5S1 and AP5Z1. Interacts with ZFYVE26 and SPG11.

The protein localises to the cytoplasm. It localises to the nucleus. As part of AP-5, a probable fifth adaptor protein complex it may be involved in endosomal transport. According to PubMed:20613862 it is a putative helicase required for efficient homologous recombination DNA double-strand break repair. The protein is AP-5 complex subunit zeta-1 (AP5Z1) of Homo sapiens (Human).